The primary structure comprises 252 residues: Ribosomal RNA large subunit methyltransferase E (252 aa).

5 residues coordinate S-adenosyl-L-methionine: glycine 48, tryptophan 50, aspartate 68, aspartate 84, and aspartate 107. The active-site Proton acceptor is the lysine 147. In terms of domain architecture, TRAM spans 194–252 (PVREGDTLEVEIDNLGDEGDGVAKVDGYTLFVSGAEPGDAPEVRVTDVKPRFGFAETLE).

This sequence belongs to the class I-like SAM-binding methyltransferase superfamily. RNA methyltransferase RlmE family.

Its subcellular location is the cytoplasm. It catalyses the reaction uridine(2552) in 23S rRNA + S-adenosyl-L-methionine = 2'-O-methyluridine(2552) in 23S rRNA + S-adenosyl-L-homocysteine + H(+). Specifically methylates the uridine in position 2552 of 23S rRNA at the 2'-O position of the ribose in the fully assembled 50S ribosomal subunit. This Natronomonas pharaonis (strain ATCC 35678 / DSM 2160 / CIP 103997 / JCM 8858 / NBRC 14720 / NCIMB 2260 / Gabara) (Halobacterium pharaonis) protein is Ribosomal RNA large subunit methyltransferase E.